A 214-amino-acid chain; its full sequence is Small ribosomal subunit protein uS5 (214 aa).

An S5 DRBM domain is found at 54-117 (LKYEVVDIKV…RDAKMNIIPV (64 aa)).

It belongs to the universal ribosomal protein uS5 family. In terms of assembly, part of the 30S ribosomal subunit. Contacts protein S4.

In terms of biological role, with S4 and S12 plays an important role in translational accuracy. The chain is Small ribosomal subunit protein uS5 from Saccharolobus solfataricus (strain ATCC 35092 / DSM 1617 / JCM 11322 / P2) (Sulfolobus solfataricus).